An 87-amino-acid chain; its full sequence is UPF0367 protein P9211_01391 (87 aa).

Belongs to the UPF0367 family.

The protein is UPF0367 protein P9211_01391 of Prochlorococcus marinus (strain MIT 9211).